Reading from the N-terminus, the 283-residue chain is Cyclin-C (283 aa).

Positions 46–144 (NVIQALGEHL…ILECEFYLLE (99 aa)) constitute a Cyclin N-terminal domain. The interval 252 to 283 (SILSKMPKPKPPPNSDGEQGTNGSQSSGYSQS) is disordered. Positions 267 to 283 (DGEQGTNGSQSSGYSQS) are enriched in polar residues.

The protein belongs to the cyclin family. Cyclin C subfamily. Component of the Mediator complex. The cylin/CDK pair formed by ccnc/cdk8 also associates with the large subunit of RNA polymerase II.

The protein resides in the nucleus. In terms of biological role, component of the Mediator complex, a coactivator involved in regulated gene transcription of nearly all RNA polymerase II-dependent genes. Mediator functions as a bridge to convey information from gene-specific regulatory proteins to the basal RNA polymerase II transcription machinery. Mediator is recruited to promoters by direct interactions with regulatory proteins and serves as a scaffold for the assembly of a functional preinitiation complex with RNA polymerase II and the general transcription factors. Binds to and activates cyclin-dependent kinase cdk8 that phosphorylates the CTD (C-terminal domain) of the large subunit of RNA polymerase II (RNAp II), which may inhibit the formation of a transcription initiation complex. This Xenopus laevis (African clawed frog) protein is Cyclin-C (ccnc).